The sequence spans 286 residues: MKIIHAVHEMQDYSEALRKAGRRIAFVPTMGYFHEGHLDLMREGRKRSDCLVVSIYVNPTQFGASEDLEKYPRNFDRDSQLAEEVGVDVIFFPSNAEMYPVNYQTYVTVEEVTKNLCGLSRPGHFRGVATVCAKLFNMVKPHAAIFGKKDFQQLVTIKRMVADLNMDLEIVGMPTTREKDGLAMSSRNVYLSPEERESALCLSRSLLMARERYDQGERDAGRILQSIKAYIESVPSTRIDYLKICSTTTMQDVQSLDQESVLALAVFVGSTRLIDNHVFGEELNIR.

30-37 (MGYFHEGH) provides a ligand contact to ATP. The active-site Proton donor is His-37. Gln-61 provides a ligand contact to (R)-pantoate. Beta-alanine is bound at residue Gln-61. 147–150 (GKKD) contributes to the ATP binding site. Gln-153 contacts (R)-pantoate. Residue 184 to 187 (MSSR) participates in ATP binding.

This sequence belongs to the pantothenate synthetase family. In terms of assembly, homodimer.

Its subcellular location is the cytoplasm. It carries out the reaction (R)-pantoate + beta-alanine + ATP = (R)-pantothenate + AMP + diphosphate + H(+). It participates in cofactor biosynthesis; (R)-pantothenate biosynthesis; (R)-pantothenate from (R)-pantoate and beta-alanine: step 1/1. In terms of biological role, catalyzes the condensation of pantoate with beta-alanine in an ATP-dependent reaction via a pantoyl-adenylate intermediate. The sequence is that of Pantothenate synthetase from Syntrophus aciditrophicus (strain SB).